Consider the following 177-residue polypeptide: Interleukin-7 (177 aa).

A signal peptide spans 1–25 (MFHVSFRYIFGLPPLILVLLPVASS). 3 cysteine pairs are disulfide-bonded: Cys27–Cys166, Cys59–Cys154, and Cys72–Cys117. 3 N-linked (GlcNAc...) asparagine glycosylation sites follow: Asn95, Asn116, and Asn141.

Belongs to the IL-7/IL-9 family. In terms of assembly, interacts with IL7R and CSF2RG.

The protein localises to the secreted. Its function is as follows. Hematopoietic cytokine that plays an essential role in the development, expansion, and survival of naive and memory T-cells and B-cells thereby regulating the number of mature lymphocytes and maintaining lymphoid homeostasis. Mechanistically, exerts its biological effects through a receptor composed of IL7RA subunit and the cytokine receptor common subunit gamma/CSF2RG. Binding to the receptor leads to activation of various kinases including JAK1 or JAK3 depending on the cell type and subsequently propagation of signals through activation of several downstream signaling pathways including the PI3K/Akt/mTOR or the JAK-STAT5. The polypeptide is Interleukin-7 (IL7) (Homo sapiens (Human)).